The following is a 97-amino-acid chain: uncharacterized protein (97 aa).

The first 21 residues, 1–21 (MLLHGLGRMNIIFICFPSLAC), serve as a signal peptide directing secretion.

This is an uncharacterized protein from Schizosaccharomyces pombe (strain 972 / ATCC 24843) (Fission yeast).